A 412-amino-acid chain; its full sequence is Orcinol synthase (412 aa).

Residues C164, H322, and N355 contribute to the active site.

It belongs to the thiolase-like superfamily. Chalcone/stilbene synthases family. As to quaternary structure, homodimer. In terms of tissue distribution, mainly expressed in young leaves, and barely in mature leaves and twigs.

It catalyses the reaction 3 malonyl-CoA + acetyl-CoA + 3 H(+) = orcinol + 4 CO2 + 4 CoA. The catalysed reaction is 3 malonyl-CoA + acetyl-CoA + 2 H(+) = orsellinate + 3 CO2 + 4 CoA. It carries out the reaction 3 malonyl-CoA + acetyl-CoA + 3 H(+) = tetraacetate lactone + 3 CO2 + 4 CoA. The enzyme catalyses 2 malonyl-CoA + acetyl-CoA + 2 H(+) = triacetate lactone + 2 CO2 + 3 CoA. It catalyses the reaction 3 malonyl-CoA + acetyl-CoA + 3 H(+) = 2-acetylphloroglucinol + 3 CO2 + 4 CoA. Its pathway is secondary metabolite biosynthesis; terpenoid biosynthesis. Its function is as follows. Involved in the biosynthesis of acetate-derived aromatic tetraketides natural products, precursors of daurichromenic acid, an anti-human immunodeficiency viruses (HIV) meroterpenoid consisting of sesquiterpene and orsellinic acid (OSA) moieties. Accepts acetyl-CoA as starter substrate and produces orcinol as the major reaction product, along with four minor products including OSA, tetraacetate lactone, triacetate lactone and 2-acetylphloroglucinol. The protein is Orcinol synthase of Rhododendron dauricum (Azalea daurica).